Here is an 898-residue protein sequence, read N- to C-terminus: Protein SOV1, mitochondrial (898 aa).

Residues 1-31 constitute a mitochondrion transit peptide; that stretch reads MFKYNRSLCSSALIAKSQIRFYRLKRAPLNY.

It is found in the mitochondrion. This is Protein SOV1, mitochondrial (SOV1) from Saccharomyces cerevisiae (strain ATCC 204508 / S288c) (Baker's yeast).